We begin with the raw amino-acid sequence, 268 residues long: Trypsin-like protease (268 aa).

An N-terminal signal peptide occupies residues 1–41 (MTHTTTIAAKRGGLALAKKAAAAGAVALAVASLQPVSAAHA). Residues 42-45 (ADAR) constitute a propeptide, activation peptide. The 221-residue stretch at 46–266 (VIGGKPAAQN…FAKDIAKAAS (221 aa)) folds into the Peptidase S1 domain. A disulfide bridge connects residues cysteine 67 and cysteine 83. Active-site charge relay system residues include histidine 82 and aspartate 127. Intrachain disulfides connect cysteine 187/cysteine 202 and cysteine 213/cysteine 242. Serine 217 serves as the catalytic Charge relay system.

The protein belongs to the peptidase S1 family.

Its function is as follows. Protease that shows preferential cleavage after Arg and Lys residues. In Streptomyces glaucescens, this protein is Trypsin-like protease.